Consider the following 277-residue polypeptide: B3 domain-containing protein At3g19184 (277 aa).

A disordered region spans residues 33 to 94 (QSLRVSSSSS…LERRPRRSSR (62 aa)). Residues 130–221 (FTKPMLQSHV…TFKVYIIRVN (92 aa)) constitute a DNA-binding region (TF-B3). Acidic residues predominate over residues 224–250 (ANNDSDGNEVNDDDSDGNEEDRDNDNE). The tract at residues 224 to 277 (ANNDSDGNEVNDDDSDGNEEDRDNDNESNEKQKETVSEGRQLRSSGKRKRRGRK) is disordered. Over residues 251 to 264 (SNEKQKETVSEGRQ) the composition is skewed to basic and acidic residues. The segment covering 268 to 277 (SGKRKRRGRK) has biased composition (basic residues).

Its subcellular location is the nucleus. The polypeptide is B3 domain-containing protein At3g19184 (Arabidopsis thaliana (Mouse-ear cress)).